Consider the following 665-residue polypeptide: Anaphase-promoting complex subunit 3 (665 aa).

The stretch at S115–N148 is one TPR 1 repeat. Residues V191 to S257 mediate DNA binding. TPR repeat units lie at residues L329–T362, P363–R396, P431–F464, Y466–H498, Y499–N532, V534–S566, L568–E600, and A601–A634.

Belongs to the APC3/CDC27 family. In terms of assembly, the APC/C is composed of at least 13 subunits: apc1, apc2, nuc2, apc4, apc5, cut9, apc8, apc10, apc11, hcn1, apc13, apc14 and apc15. Interacts with apc10 and cut9.

The protein localises to the nucleus. In terms of biological role, component of the anaphase-promoting complex/cyclosome (APC/C), a cell cycle-regulated E3 ubiquitin-protein ligase complex that controls progression through mitosis and the G1 phase of the cell cycle. The APC/C is thought to confer substrate specificity and, in the presence of ubiquitin-conjugating E2 enzymes, it catalyzes the formation of protein-ubiquitin conjugates that are subsequently degraded by the 26S proteasome. Interacts with spindle apparatus, chromosomes, or nuclear envelope, and interconnect nuclear and cytoskeletal functions in mitosis, so the elongation of the spindle in anaphase is blocked. This is Anaphase-promoting complex subunit 3 (nuc2) from Schizosaccharomyces pombe (strain 972 / ATCC 24843) (Fission yeast).